The primary structure comprises 447 residues: N-succinylarginine dihydrolase (447 aa).

Residues 19–28, Asn110, and 137–138 contribute to the substrate site; these read AGLSFGNEAS and HR. The active site involves Glu174. Arg212 is a substrate binding site. His248 is an active-site residue. The substrate site is built by Asp250 and Asn359. The active-site Nucleophile is the Cys365.

This sequence belongs to the succinylarginine dihydrolase family. As to quaternary structure, homodimer.

It catalyses the reaction N(2)-succinyl-L-arginine + 2 H2O + 2 H(+) = N(2)-succinyl-L-ornithine + 2 NH4(+) + CO2. The protein operates within amino-acid degradation; L-arginine degradation via AST pathway; L-glutamate and succinate from L-arginine: step 2/5. Catalyzes the hydrolysis of N(2)-succinylarginine into N(2)-succinylornithine, ammonia and CO(2). The chain is N-succinylarginine dihydrolase from Salmonella agona (strain SL483).